The following is a 905-amino-acid chain: Dopamine D2-like receptor (905 aa).

The disordered stretch occupies residues Met-1–Gln-23. Residues Met-1–Tyr-377 lie on the Extracellular side of the membrane. Asn-88, Asn-146, Asn-156, Asn-166, Asn-174, Asn-257, Asn-314, and Asn-343 each carry an N-linked (GlcNAc...) asparagine glycan. The chain crosses the membrane as a helical span at residues Trp-378–Leu-398. The Cytoplasmic portion of the chain corresponds to Ser-399–Ser-416. Residues Leu-417 to Val-437 form a helical membrane-spanning segment. Residues Asn-438 to Phe-450 lie on the Extracellular side of the membrane. Residues Cys-448 and Cys-525 are joined by a disulfide bond. The chain crosses the membrane as a helical span at residues Tyr-451 to Ile-471. Residues Asp-472–Cys-493 are Cytoplasmic-facing. Residues Leu-494–Leu-514 form a helical membrane-spanning segment. The Extracellular segment spans residues Asn-515–Asp-531. The chain crosses the membrane as a helical span at residues Phe-532–Tyr-552. The Cytoplasmic portion of the chain corresponds to Trp-553–Thr-830. Disordered regions lie at residues Ser-600–Asp-631, Ala-702–Val-753, and Asp-780–Gln-799. A compositionally biased stretch (low complexity) spans Ala-702 to Ala-722. Residues Thr-723–Arg-734 show a composition bias toward polar residues. Residues Pro-735–Pro-746 are compositionally biased toward basic and acidic residues. Residues Leu-831–Met-851 traverse the membrane as a helical segment. Over Asp-852–Tyr-869 the chain is Extracellular. The chain crosses the membrane as a helical span at residues Met-870 to Phe-890. Over Asn-891–Gly-905 the chain is Cytoplasmic.

It belongs to the G-protein coupled receptor 1 family. As to expression, highest expression is in adult heads.

Its subcellular location is the cell membrane. In terms of biological role, receptor for dopamine. The activity of this receptor is mediated by G proteins which inhibit adenylyl cyclase. This is Dopamine D2-like receptor from Drosophila melanogaster (Fruit fly).